A 125-amino-acid chain; its full sequence is Large ribosomal subunit protein bL12 (125 aa).

Belongs to the bacterial ribosomal protein bL12 family. As to quaternary structure, homodimer. Part of the ribosomal stalk of the 50S ribosomal subunit. Forms a multimeric L10(L12)X complex, where L10 forms an elongated spine to which 2 to 4 L12 dimers bind in a sequential fashion. Binds GTP-bound translation factors.

Its function is as follows. Forms part of the ribosomal stalk which helps the ribosome interact with GTP-bound translation factors. Is thus essential for accurate translation. The chain is Large ribosomal subunit protein bL12 from Alkalilimnicola ehrlichii (strain ATCC BAA-1101 / DSM 17681 / MLHE-1).